Here is a 400-residue protein sequence, read N- to C-terminus: MTETTPTTNETKEQVITPWEVEAAPGGSVDYMKLVDQFGSTVISEELIARFEKVTGKRAHHFLRRGIFFSHRDLKEILDHHESGKKWFLYTGRGPSSGSLHFGHLLPFTFTKYLQDAFNVPLVVQMTNDEKFLWKDMTLEESIKFTHNNVKDIIALGFDIQKTFIFSNLEYIHHLYPNVLKIARCVNLNQIQNIFGFKESDAIGKFTFPPVQAAPCFPDSFPHIFPLNDPEIKNIRCLIPCAIDQDPYFRMTRDIAHRIGHQKPALIHSKFFPALQGHNTKMSASDTNSAVYLSDTPDQVKDKIKKHAFSGGGATKEEQEKNGADLSVDITYEYLTFMLEDDEQLKDIAHRYSTGKMMTGEIKQILIDLMNKIIIRHKEARAKITDEVLSTFMSIRKLNF.

The short motif at 95–104 (PSSGSLHFGH) is the 'HIGH' region element. Residues 281–285 (KMSAS) carry the 'KMSKS' region motif.

Belongs to the class-I aminoacyl-tRNA synthetase family.

The protein resides in the cytoplasm. It catalyses the reaction tRNA(Trp) + L-tryptophan + ATP = L-tryptophyl-tRNA(Trp) + AMP + diphosphate + H(+). This chain is Tryptophan--tRNA ligase, cytoplasmic (trpS), found in Dictyostelium discoideum (Social amoeba).